Reading from the N-terminus, the 264-residue chain is MSKVTSSTLLKFKQEGTKFTSITAYDASFAAAFDSEGIDAILVGDSLGMVLQGHDDTLPVTTADVAYHTACVRRGISRALLIADMPFMSYATPEQAMTNATTLMQAGANMVKLEGGHWLLETVTMLTQRGIPVCGHLGLTPQSVHVFGGFKMQGKDEKNAQRILDEALALQDAGAQLLVLECIPAALAKTITQAVAIPVIGIGAGADTDGQILVMHDVLGITSGYIPKFSKNYLKQTGEIRSAIKAYIDEVAAGDFPSEEHTLV.

Residues aspartate 45 and aspartate 84 each coordinate Mg(2+). Residues 45-46 (DS), aspartate 84, and lysine 112 contribute to the 3-methyl-2-oxobutanoate site. Mg(2+) is bound at residue glutamate 114. The Proton acceptor role is filled by glutamate 181.

This sequence belongs to the PanB family. Homodecamer; pentamer of dimers. The cofactor is Mg(2+).

It localises to the cytoplasm. The enzyme catalyses 3-methyl-2-oxobutanoate + (6R)-5,10-methylene-5,6,7,8-tetrahydrofolate + H2O = 2-dehydropantoate + (6S)-5,6,7,8-tetrahydrofolate. It participates in cofactor biosynthesis; (R)-pantothenate biosynthesis; (R)-pantoate from 3-methyl-2-oxobutanoate: step 1/2. Catalyzes the reversible reaction in which hydroxymethyl group from 5,10-methylenetetrahydrofolate is transferred onto alpha-ketoisovalerate to form ketopantoate. This Shewanella denitrificans (strain OS217 / ATCC BAA-1090 / DSM 15013) protein is 3-methyl-2-oxobutanoate hydroxymethyltransferase.